The primary structure comprises 534 residues: CTP synthase (534 aa).

The tract at residues 1–265 (MKYIIVTGGV…SNYLLKKLIL (265 aa)) is amidoligase domain. A CTP-binding site is contributed by Ser-12. Ser-12 provides a ligand contact to UTP. Residue 13 to 18 (GLGKGI) participates in ATP binding. L-glutamine is bound at residue Tyr-53. Asp-70 is a binding site for ATP. Residues Asp-70 and Glu-140 each contribute to the Mg(2+) site. CTP contacts are provided by residues 147 to 149 (DIE), 186 to 191 (KTKPTQ), and Lys-222. UTP contacts are provided by residues 186–191 (KTKPTQ) and Lys-222. Positions 289–530 (NVAIVGKYTH…MGAMLKKSKE (242 aa)) constitute a Glutamine amidotransferase type-1 domain. Gly-352 provides a ligand contact to L-glutamine. The active-site Nucleophile; for glutamine hydrolysis is the Cys-379. L-glutamine is bound by residues 380–383 (LGMQ), Glu-403, and Arg-460. Residues His-503 and Glu-505 contribute to the active site.

Belongs to the CTP synthase family. In terms of assembly, homotetramer.

The enzyme catalyses UTP + L-glutamine + ATP + H2O = CTP + L-glutamate + ADP + phosphate + 2 H(+). It catalyses the reaction L-glutamine + H2O = L-glutamate + NH4(+). It carries out the reaction UTP + NH4(+) + ATP = CTP + ADP + phosphate + 2 H(+). It functions in the pathway pyrimidine metabolism; CTP biosynthesis via de novo pathway; CTP from UDP: step 2/2. With respect to regulation, allosterically activated by GTP, when glutamine is the substrate; GTP has no effect on the reaction when ammonia is the substrate. The allosteric effector GTP functions by stabilizing the protein conformation that binds the tetrahedral intermediate(s) formed during glutamine hydrolysis. Inhibited by the product CTP, via allosteric rather than competitive inhibition. In terms of biological role, catalyzes the ATP-dependent amination of UTP to CTP with either L-glutamine or ammonia as the source of nitrogen. Regulates intracellular CTP levels through interactions with the four ribonucleotide triphosphates. The sequence is that of CTP synthase from Methanococcoides burtonii (strain DSM 6242 / NBRC 107633 / OCM 468 / ACE-M).